The primary structure comprises 641 residues: MLAYYVSVNQGPGIEQKSLPQLTRLLDQGRVKALVFIRDTSTGQTFLEGRYTRPAGPTENAEIVVPFRTVVDLEFNRDLKQFLASKGFPEIDVKVIHNFWGQAFLSVLPFLLFILALYFLFRQQIRMAGRGAFSFGKSRARLLSGGKTKVTFKDVAGVEEAKEEVQELVEFLKDPKKFQKLGGRIPKGVLMVGPPGTGKTLLAKAIAGEADVPFFSISGSDFVEMFVGVGASRVRDMFEQARRHAPCIVFIDEIDAVGRARGTGLGGGHDEREQTLNALLVEMDGIESQEGVIVIAATNRKDVLDPALLRPGRFDREVRVNLPDIRGREQILRVHAQKIKLSKNADLSALARGTPGFSGAELANLINEAALIAAKKGKDNVDQPDLEEARDKVRWGKERRSLAMSEEERKTTAYHEAGHAVLNVLLENTDPIHKVTIIPRGPALGVTMMLPASDKYNARKKEVLDDLCVAMGGRVAEEVFLGDISSGASGDIRQATWYARKMVCEWGMSEKLGMVHYADDSSMVFLGRELGTSRGYSEATARAIDHEVQHFIQAAYEKAKRIILEHKDKVEALAQALLEYETLNADQVTEIVKTGKMTNPPSKNSSPVSNGGEASSTKSPARQEETTKDGGLLPGLEGAPA.

At 1–100 (MLAYYVSVNQ…IDVKVIHNFW (100 aa)) the chain is on the periplasmic side. The helical transmembrane segment at 101–121 (GQAFLSVLPFLLFILALYFLF) threads the bilayer. Residues 122-641 (RQQIRMAGRG…LLPGLEGAPA (520 aa)) lie on the Cytoplasmic side of the membrane. 193-200 (GPPGTGKT) lines the ATP pocket. His-415 contributes to the Zn(2+) binding site. Residue Glu-416 is part of the active site. Residues His-419 and Asp-491 each coordinate Zn(2+). The segment at 593-641 (KTGKMTNPPSKNSSPVSNGGEASSTKSPARQEETTKDGGLLPGLEGAPA) is disordered. Composition is skewed to low complexity over residues 599–610 (NPPSKNSSPVSN) and 630–641 (GGLLPGLEGAPA).

This sequence in the central section; belongs to the AAA ATPase family. It in the C-terminal section; belongs to the peptidase M41 family. As to quaternary structure, homohexamer. The cofactor is Zn(2+).

The protein localises to the cell inner membrane. Functionally, acts as a processive, ATP-dependent zinc metallopeptidase for both cytoplasmic and membrane proteins. Plays a role in the quality control of integral membrane proteins. This chain is ATP-dependent zinc metalloprotease FtsH 2, found in Methylacidiphilum infernorum (isolate V4) (Methylokorus infernorum (strain V4)).